The chain runs to 294 residues: Aquaporin-B (294 aa).

The tract at residues 1 to 31 (MSLKRSDDYQDLEEGIAMEDGGNIKDEEEKP) is disordered. Residues 1–42 (MSLKRSDDYQDLEEGIAMEDGGNIKDEEEKPLDPIEEQNKKR) lie on the Cytoplasmic side of the membrane. The span at 22-31 (GNIKDEEEKP) shows a compositional bias: basic and acidic residues. The helical transmembrane segment at 43 to 63 (WVLIRAVLGELLCTFLFVYVL) threads the bilayer. Residues 64–79 (CATSANFIRLGSPPNP) are Extracellular-facing. The O-linked (GalNAc...) serine glycan is linked to Ser-75. A helical transmembrane segment spans residues 80-100 (VVGGLSTGFAAVALIYSFADV). Residues 101-123 (SGAHFNPAVTFATCVTRKTSITK) are Cytoplasmic-facing. Positions 106 to 108 (NPA) match the NPA 1 motif. A helical membrane pass occupies residues 124–144 (GLMYVGAQLVGSVLASLILLA). At 145–172 (TFPGNFPGDKNAASAVAIAPSTDANIGN) the chain is on the extracellular side. A helical membrane pass occupies residues 173–193 (AFLTELVLTFILVYVIFAVAF). The Cytoplasmic portion of the chain corresponds to 194 to 224 (DTVDNSVKTKVVGKSSSNNLTIYTTSGQTKA). Residues 208–219 (SSSNNLTIYTTS) are required for water permeability. A helical membrane pass occupies residues 225-245 (GFAPIAIGFTLGFLCFLGGSV). Residues 246-268 (SGGAFNPARVFGTALVGNNWTRH) lie on the Extracellular side of the membrane. The short motif at 251–253 (NPA) is the NPA 2 element. The helical transmembrane segment at 269–289 (WMYWIADFLGAGLAGFAQKFF) threads the bilayer. Residues 290–294 (SSTHK) lie on the Cytoplasmic side of the membrane.

The protein belongs to the MIP/aquaporin (TC 1.A.8) family. Glycosylated and non-glycosylated forms exist throughout all developmental stages.

It localises to the cell membrane. It is found in the cytoplasmic vesicle. In terms of biological role, putatively gated water-specific channel, requiring a cysteine residue within the channel. Impermeable to water, glycerol and urea when expressed in Xenopus oocytes. Not regulated by pH; channels remain impermeable to water at pH 7.4 and 5.2. In Dictyostelium discoideum (Social amoeba), this protein is Aquaporin-B.